A 247-amino-acid chain; its full sequence is Adenosine 5'-phosphosulfate reductase (247 aa).

Positions 133, 134, 216, and 219 each coordinate [4Fe-4S] cluster. A disordered region spans residues 222-247; it reads KPAPGSDPRSGRWAGASKTECGLHAS. The Nucleophile; cysteine thiosulfonate intermediate role is filled by cysteine 242.

Belongs to the PAPS reductase family. CysH subfamily. [4Fe-4S] cluster serves as cofactor.

It localises to the cytoplasm. The enzyme catalyses [thioredoxin]-disulfide + sulfite + AMP + 2 H(+) = adenosine 5'-phosphosulfate + [thioredoxin]-dithiol. It participates in sulfur metabolism; hydrogen sulfide biosynthesis; sulfite from sulfate. Functionally, catalyzes the formation of sulfite from adenosine 5'-phosphosulfate (APS) using thioredoxin as an electron donor. The sequence is that of Adenosine 5'-phosphosulfate reductase from Rhodococcus erythropolis (strain PR4 / NBRC 100887).